A 357-amino-acid polypeptide reads, in one-letter code: Dihydroorotate dehydrogenase (quinone) (357 aa).

FMN-binding positions include A65–K69 and T89. K69 lines the substrate pocket. N114–F118 contacts substrate. FMN is bound by residues N156 and N189. N189 is a binding site for substrate. S192 functions as the Nucleophile in the catalytic mechanism. A substrate-binding site is contributed by N194. K234 and T262 together coordinate FMN. N263–T264 is a substrate binding site. FMN-binding positions include G285, G314, and Y335–T336.

This sequence belongs to the dihydroorotate dehydrogenase family. Type 2 subfamily. Monomer. It depends on FMN as a cofactor.

The protein localises to the cell membrane. The enzyme catalyses (S)-dihydroorotate + a quinone = orotate + a quinol. Its pathway is pyrimidine metabolism; UMP biosynthesis via de novo pathway; orotate from (S)-dihydroorotate (quinone route): step 1/1. Catalyzes the conversion of dihydroorotate to orotate with quinone as electron acceptor. The protein is Dihydroorotate dehydrogenase (quinone) of Albidiferax ferrireducens (strain ATCC BAA-621 / DSM 15236 / T118) (Rhodoferax ferrireducens).